The sequence spans 312 residues: Pantothenate kinase (312 aa).

97 to 104 provides a ligand contact to ATP; sequence GSVAVGKS.

It belongs to the prokaryotic pantothenate kinase family.

Its subcellular location is the cytoplasm. It catalyses the reaction (R)-pantothenate + ATP = (R)-4'-phosphopantothenate + ADP + H(+). It participates in cofactor biosynthesis; coenzyme A biosynthesis; CoA from (R)-pantothenate: step 1/5. The polypeptide is Pantothenate kinase (coaA) (Mycobacterium leprae (strain TN)).